The chain runs to 591 residues: 5'-nucleotidase domain-containing protein DDB_G0275467 (591 aa).

Composition is skewed to low complexity over residues 38-50 (STTT…SYST) and 68-78 (QHQQQQPQQHQ). Positions 38–88 (STTTTSGIKSYSTHNRSNNDTHTSKSNTIDQHQQQQPQQHQNNDNKHLFTP) are disordered. Asp165 functions as the Nucleophile in the catalytic mechanism. Asp165 and Asp167 together coordinate Mg(2+). Catalysis depends on Asp167, which acts as the Proton donor. Residue 305-313 (TAAVGKVHL) coordinates substrate. Residue Asp450 coordinates Mg(2+).

It belongs to the 5'(3')-deoxyribonucleotidase family. Mg(2+) is required as a cofactor.

In Dictyostelium discoideum (Social amoeba), this protein is 5'-nucleotidase domain-containing protein DDB_G0275467.